The following is a 521-amino-acid chain: Beta-glucosidase 11 (521 aa).

A signal peptide spans 1–23 (MKLLSNSLMFLPLLALALTAVSS). A beta-D-glucoside is bound by residues Gln45, His144, and 189–190 (NE). Catalysis depends on Glu190, which acts as the Proton donor. A disulfide bridge connects residues Cys209 and Cys217. Asn216 and Asn221 each carry an N-linked (GlcNAc...) asparagine glycan. Tyr356 is an a beta-D-glucoside binding site. N-linked (GlcNAc...) asparagine glycosylation is found at Asn364 and Asn388. A beta-D-glucoside contacts are provided by Glu422, Trp466, and Phe482. Glu422 (nucleophile) is an active-site residue.

This sequence belongs to the glycosyl hydrolase 1 family.

The enzyme catalyses Hydrolysis of terminal, non-reducing beta-D-glucosyl residues with release of beta-D-glucose.. This Arabidopsis thaliana (Mouse-ear cress) protein is Beta-glucosidase 11.